We begin with the raw amino-acid sequence, 803 residues long: Leucine--tRNA ligase (803 aa).

The 'HIGH' region signature appears at Pro40–His51. The 'KMSKS' region signature appears at Lys575–Ser579. Lys578 provides a ligand contact to ATP.

The protein belongs to the class-I aminoacyl-tRNA synthetase family.

Its subcellular location is the cytoplasm. The catalysed reaction is tRNA(Leu) + L-leucine + ATP = L-leucyl-tRNA(Leu) + AMP + diphosphate. The polypeptide is Leucine--tRNA ligase (Listeria welshimeri serovar 6b (strain ATCC 35897 / DSM 20650 / CCUG 15529 / CIP 8149 / NCTC 11857 / SLCC 5334 / V8)).